A 208-amino-acid chain; its full sequence is Uracil phosphoribosyltransferase (208 aa).

Residues Arg78, Arg103, and 130–138 (DPMLATGGS) contribute to the 5-phospho-alpha-D-ribose 1-diphosphate site. Uracil-binding positions include Ile193 and 198–200 (GDA). Asp199 contacts 5-phospho-alpha-D-ribose 1-diphosphate.

It belongs to the UPRTase family. Mg(2+) serves as cofactor.

It catalyses the reaction UMP + diphosphate = 5-phospho-alpha-D-ribose 1-diphosphate + uracil. Its pathway is pyrimidine metabolism; UMP biosynthesis via salvage pathway; UMP from uracil: step 1/1. Its activity is regulated as follows. Allosterically activated by GTP. Its function is as follows. Catalyzes the conversion of uracil and 5-phospho-alpha-D-ribose 1-diphosphate (PRPP) to UMP and diphosphate. This chain is Uracil phosphoribosyltransferase, found in Roseiflexus castenholzii (strain DSM 13941 / HLO8).